The chain runs to 320 residues: Ferrochelatase (320 aa).

2 residues coordinate Fe cation: histidine 194 and glutamate 275.

This sequence belongs to the ferrochelatase family.

Its subcellular location is the cytoplasm. It carries out the reaction heme b + 2 H(+) = protoporphyrin IX + Fe(2+). The protein operates within porphyrin-containing compound metabolism; protoheme biosynthesis; protoheme from protoporphyrin-IX: step 1/1. Its function is as follows. Catalyzes the ferrous insertion into protoporphyrin IX. The chain is Ferrochelatase from Xylella fastidiosa (strain M12).